Reading from the N-terminus, the 250-residue chain is MWIGVISLFPEMFRAITDYGVTGRAVKNGLLSIECWNPRDFTYDRHRTVDDRPYGGGPGMLMMVQPLREAIHAAKTAAGEGAKVIYLSPQGRKLNQQGVCELATNEKLILICGRYEGIDERVIQTEIDEEWSIGDYVLSGGEIPAMTMIDSVSRFIPGVLGHQASAEEDSFADGLLDCPHYTRPEVLDGMEVPPVLLSGNHAEINRWRMKQSLGRTWLRRPELLENLALTDEQRILLTEFQREHLTEATN.

Residues glycine 113 and 133–138 contribute to the S-adenosyl-L-methionine site; that span reads IGDYVL.

The protein belongs to the RNA methyltransferase TrmD family. As to quaternary structure, homodimer.

The protein resides in the cytoplasm. It catalyses the reaction guanosine(37) in tRNA + S-adenosyl-L-methionine = N(1)-methylguanosine(37) in tRNA + S-adenosyl-L-homocysteine + H(+). Specifically methylates guanosine-37 in various tRNAs. The sequence is that of tRNA (guanine-N(1)-)-methyltransferase from Photorhabdus laumondii subsp. laumondii (strain DSM 15139 / CIP 105565 / TT01) (Photorhabdus luminescens subsp. laumondii).